The chain runs to 213 residues: 2-C-methyl-D-erythritol 4-phosphate cytidylyltransferase (213 aa).

Belongs to the IspD/TarI cytidylyltransferase family. IspD subfamily.

The enzyme catalyses 2-C-methyl-D-erythritol 4-phosphate + CTP + H(+) = 4-CDP-2-C-methyl-D-erythritol + diphosphate. The protein operates within isoprenoid biosynthesis; isopentenyl diphosphate biosynthesis via DXP pathway; isopentenyl diphosphate from 1-deoxy-D-xylulose 5-phosphate: step 2/6. Catalyzes the formation of 4-diphosphocytidyl-2-C-methyl-D-erythritol from CTP and 2-C-methyl-D-erythritol 4-phosphate (MEP). The protein is 2-C-methyl-D-erythritol 4-phosphate cytidylyltransferase of Thermus thermophilus (strain ATCC BAA-163 / DSM 7039 / HB27).